Consider the following 2037-residue polypeptide: Protein SWOLLEN 1 (2037 aa).

11 disordered regions span residues 141 to 179 (VEPGQTSHERSLSKEETVNLQPNPSVDDTPGESSVVKTD), 454 to 487 (REGGVSKKSDNEGSARTSNLEQSMELPVNANDRD), 504 to 531 (SVGYVSGGSTSELAESESQSDSIPTDKS), 567 to 637 (KTSS…KDAV), 686 to 705 (SLPILGSEAGKDGQEEDNTA), 837 to 893 (VGSP…SGGK), 1011 to 1045 (ATPETPLQSRPGKTETPSAGHTNSKESSGTNPMIP), 1148 to 1197 (KHVQ…ESGP), 1729 to 1748 (SGETISSSHEGDTPKEKRPR), 1793 to 1812 (KSTREENKPDPLRMKRTGLQ), and 1841 to 2037 (EAST…QSKK). Positions 147–157 (SHERSLSKEET) are enriched in basic and acidic residues. The segment covering 158-176 (VNLQPNPSVDDTPGESSVV) has biased composition (polar residues). The span at 454 to 466 (REGGVSKKSDNEG) shows a compositional bias: basic and acidic residues. Low complexity predominate over residues 504–514 (SVGYVSGGSTS). The segment covering 515 to 526 (ELAESESQSDSI) has biased composition (polar residues). The span at 841–852 (STSSLDKTAAKS) shows a compositional bias: low complexity. The span at 853-865 (SKAKSERKPRRTS) shows a compositional bias: basic residues. Polar residues-rich tracts occupy residues 1025–1041 (ETPSAGHTNSKESSGTN) and 1151–1171 (QSGTSSNVSKVTPTLEPTSTV). The segment covering 1179–1189 (TRVKSRKRKKM) has biased composition (basic residues). Residues 1794-1805 (STREENKPDPLR) show a composition bias toward basic and acidic residues. 3 stretches are compositionally biased toward polar residues: residues 1874 to 1886 (KTISIEKQTTISR), 1942 to 1964 (EEQTTSSSHDTGSKNSSSLSTNK), and 2013 to 2023 (LQTSMMTSKIP). Residues 2028–2037 (SKSHLSQSKK) show a composition bias toward basic residues.

In terms of assembly, interacts with importin alpha IMPA1 and IMPA2, required for nuclear-localized proteins import. As to expression, mainly expressed in seedlings, flower buds and stems, and, to a lower extent, in leaves and siliques.

The protein localises to the nucleus. Its function is as follows. Under salt stress, appears to prevent the accumulation of reactive oxygen species (ROS) in roots and required for the maintenance of cell wall integrity (cellulose, pectin and lignin composition) by interacting with importin alpha (e.g. IMPA1 and IMPA2) and binding to the promoter of several ROS- and cell wall-related genes to regulate their expression. Necessary for cells organization in meristems and root elongation zones as well as for root elongation in high salinity, but not upon osmotic stress. This Arabidopsis thaliana (Mouse-ear cress) protein is Protein SWOLLEN 1.